A 476-amino-acid chain; its full sequence is WASH complex subunit 1 (476 aa).

The required for WASH complex assembly stretch occupies residues 1–54; it reads MTTVAQKHFLEGQTYSVPLIQPDLRREEAVQQVADALQYLQKVSGDIFNRISQR. 2 disordered regions span residues 273–412 and 427–476; these read SAPS…QGGD and GISG…DWES. Positions 284 to 296 are enriched in polar residues; sequence TFSTESVEPSQAD. Over residues 302–333 the composition is skewed to pro residues; the sequence is LLPPPPPPPPPPPPVMPTTVPPPPPLPQPTAP. The segment at 354–476 is VCA; it reads QGAPKEVVNP…GEEDEDDWES (123 aa). A WH2 domain is found at 366–388; that stretch reads GRASLLESIRQAGGIGKANLRSV. Positions 387–403 are enriched in basic and acidic residues; it reads SVKERKLEKKKQKEQEQ. A compositionally biased stretch (acidic residues) spans 467-476; that stretch reads GEEDEDDWES.

Belongs to the WASH1 family. In terms of assembly, component of the WASH complex.

It is found in the early endosome membrane. The protein resides in the recycling endosome membrane. In terms of biological role, acts as a nucleation-promoting factor at the surface of endosomes, where it recruits and activates the Arp2/3 complex to induce actin polymerization, playing a key role in the fission of tubules that serve as transport intermediates during endosome sorting. In Gallus gallus (Chicken), this protein is WASH complex subunit 1.